Reading from the N-terminus, the 389-residue chain is MSEIRFTNLTWDQVITLDQVLDEVIPIHGKGNFPTMEVKPKDIIHVVKDQLIGQGIIVKDARLNGSVASYILASHNGISYKDLDVIFGVELPGNEEFQVVKDAVLDCLLDFLPKDVKKEKLSPDIMKDAYVQKLVKVCNGHDCWSLISLSNNTGKNLELKFVSSLRRQFEFSVDSFQIVLDPMLDFYSDKNAKLTKESYPVVVAESMYGDFQEAMTHLQHKLICTRKPEEIRGGGLLKYCSLLVHGFKPACMSEIKNLERYMCSRFFIDFPHIEEQQKKIESYLHNHFIGEGMTKYDYLMTLHGVVNESTVCLMSYERRQILHLITMMALKVLGELNILPNTQKVTCFYQPAPYFAAEARYPIYVIPEPPPVSFQPYHPLHFRGSNGMS.

The protein belongs to the TENT family. As to expression, restricted to testis.

The enzyme catalyses RNA(n) + ATP = RNA(n)-3'-adenine ribonucleotide + diphosphate. Functionally, catalyzes the transfer of one adenosine molecule from an ATP to an mRNA poly(A) tail bearing a 3'-OH terminal group. The protein is Terminal nucleotidyltransferase 5D of Homo sapiens (Human).